Reading from the N-terminus, the 142-residue chain is uncharacterized protein (142 aa).

The protein belongs to the IIV-6 115R family.

This is an uncharacterized protein from Invertebrate iridescent virus 3 (IIV-3).